Here is a 240-residue protein sequence, read N- to C-terminus: Large ribosomal subunit protein uL3 (240 aa).

Disordered regions lie at residues 139-164 (VSHR…KMPG) and 215-240 (DAPK…QEGV). N5-methylglutamine is present on Gln-151. A compositionally biased stretch (low complexity) spans 225 to 240 (ADGGEQAAPAAEQEGV).

It belongs to the universal ribosomal protein uL3 family. As to quaternary structure, part of the 50S ribosomal subunit. Forms a cluster with proteins L14 and L19. Methylated by PrmB.

In terms of biological role, one of the primary rRNA binding proteins, it binds directly near the 3'-end of the 23S rRNA, where it nucleates assembly of the 50S subunit. In Rhodopseudomonas palustris (strain BisA53), this protein is Large ribosomal subunit protein uL3.